The following is a 460-amino-acid chain: Argininosuccinate lyase (460 aa).

Belongs to the lyase 1 family. Argininosuccinate lyase subfamily.

Its subcellular location is the cytoplasm. The enzyme catalyses 2-(N(omega)-L-arginino)succinate = fumarate + L-arginine. It participates in amino-acid biosynthesis; L-arginine biosynthesis; L-arginine from L-ornithine and carbamoyl phosphate: step 3/3. The chain is Argininosuccinate lyase from Streptococcus mutans serotype c (strain ATCC 700610 / UA159).